A 418-amino-acid polypeptide reads, in one-letter code: Gamma-glutamyl phosphate reductase (418 aa).

It belongs to the gamma-glutamyl phosphate reductase family.

It is found in the cytoplasm. It carries out the reaction L-glutamate 5-semialdehyde + phosphate + NADP(+) = L-glutamyl 5-phosphate + NADPH + H(+). Its pathway is amino-acid biosynthesis; L-proline biosynthesis; L-glutamate 5-semialdehyde from L-glutamate: step 2/2. Functionally, catalyzes the NADPH-dependent reduction of L-glutamate 5-phosphate into L-glutamate 5-semialdehyde and phosphate. The product spontaneously undergoes cyclization to form 1-pyrroline-5-carboxylate. This chain is Gamma-glutamyl phosphate reductase, found in Aliivibrio fischeri (strain MJ11) (Vibrio fischeri).